Consider the following 650-residue polypeptide: Aminopeptidase B (650 aa).

Residue Gly298 to Asn302 coordinates substrate. A Zn(2+)-binding site is contributed by His325. The active-site Proton acceptor is the Glu326. Zn(2+)-binding residues include His329 and Glu348. Lys446 is subject to N6-acetyllysine.

This sequence belongs to the peptidase M1 family. Monomer. Requires Zn(2+) as cofactor.

The protein resides in the secreted. The enzyme catalyses Release of N-terminal Arg and Lys from oligopeptides when P1' is not Pro. Also acts on arylamides of Arg and Lys.. Exopeptidase which selectively removes arginine and/or lysine residues from the N-terminus of several peptide substrates including Arg(0)-Leu-enkephalin, Arg(0)-Met-enkephalin and Arg(-1)-Lys(0)-somatostatin-14. Can hydrolyze leukotriene A4 (LTA-4) into leukotriene B4 (LTB-4). This Mus musculus (Mouse) protein is Aminopeptidase B (Rnpep).